A 397-amino-acid chain; its full sequence is Class V chitinase CHIT5 (397 aa).

The signal sequence occupies residues 1-18 (MIIKLLVALIHYLHETMA). The 344-residue stretch at 54–397 (GVRAAYWPAW…SKQASNAWGY (344 aa)) folds into the GH18 domain. Residues Asn128 and Asn147 are each glycosylated (N-linked (GlcNAc...) asparagine). The active-site Proton donor is the Glu166. 4 N-linked (GlcNAc...) asparagine glycosylation sites follow: Asn193, Asn209, Asn247, and Asn261.

The protein belongs to the glycosyl hydrolase 18 family. Chitinase class V subfamily.

The enzyme catalyses Random endo-hydrolysis of N-acetyl-beta-D-glucosaminide (1-&gt;4)-beta-linkages in chitin and chitodextrins.. Its pathway is glycan degradation; chitin degradation. In terms of biological role, possesses chitinase activity in vitro toward glycol chitin, carboxymethyl-chitin, colloidal chitin, and the chitin oligosaccharides (N-acetylglucosamine) (GlcNAc)6 and (GlcNAc)5. Hydrolyzes (GlcNAc)6 into (GlcNAc)4 and (GlcNAc)2, or two (GlcNAc)3 molecules. Has the capacity to inhibit hyphal growth of the fungus Trichoderma viride in an agar-plate bioassay. Involved in symbiotic signaling. Required for root hair infection threads (ITs) elongation and nodule development. Possesses Nod factor (NF) hydrolase activity. NFs are lipo-chitooligosaccharide signaling molecules produced by nitrogen-fixing rhizobia to initiate nodulation (symbiosis) on the roots of legumes. Modulates NF levels and signaling to complete transition of infected nodules to functional nitrogen-fixing organs. The chain is Class V chitinase CHIT5 from Lotus japonicus (Lotus corniculatus var. japonicus).